Here is a 684-residue protein sequence, read N- to C-terminus: Galactocerebrosidase (684 aa).

The first 42 residues, 1 to 42 (MANSQPKASQQRQAKVMTAAAGSASRVAVPLLLCALLVPGGA), serve as a signal peptide directing secretion. Residues threonine 109, tryptophan 151, and asparagine 197 each coordinate substrate. Glutamate 198 functions as the Proton donor/acceptor in the catalytic mechanism. Residue glutamate 274 is the Nucleophile of the active site. A disulfide bridge connects residues cysteine 287 and cysteine 394. N-linked (GlcNAc...) asparagine glycosylation is found at asparagine 300 and asparagine 379. Substrate is bound at residue arginine 396. N-linked (GlcNAc...) asparagine glycosylation is found at asparagine 403, asparagine 558, asparagine 601, and asparagine 645.

Belongs to the glycosyl hydrolase 59 family. In terms of tissue distribution, detected in brain and kidney.

It localises to the lysosome. It catalyses the reaction a beta-D-galactosyl-(1&lt;-&gt;1')-N-acylsphing-4-enine + H2O = an N-acylsphing-4-enine + D-galactose. The catalysed reaction is a D-galactosylceramide + H2O = an N-acyl-sphingoid base + D-galactose. The enzyme catalyses beta-D-galactosyl-(1&lt;-&gt;1)-sphing-4-enine + H2O = sphing-4-enine + D-galactose. In terms of biological role, hydrolyzes the galactose ester bonds of glycolipids such as galactosylceramide and galactosylsphingosine. Enzyme with very low activity responsible for the lysosomal catabolism of galactosylceramide, a major lipid in myelin, kidney and epithelial cells of small intestine and colon. This chain is Galactocerebrosidase, found in Mus musculus (Mouse).